The sequence spans 330 residues: Putative UV-damage endonuclease (330 aa).

The protein belongs to the uve1/UvsE family.

Its subcellular location is the virion. Its function is as follows. Endonuclease for the repair of UV-irradiated DNA. This chain is Putative UV-damage endonuclease, found in Acanthamoeba polyphaga mimivirus (APMV).